Reading from the N-terminus, the 537-residue chain is Pheophorbide a oxygenase, chloroplastic (537 aa).

The transit peptide at 1–49 directs the protein to the chloroplast; it reads MSVVLLSSTSATITKSQSKKIPFLSPTTKFPLKVSISPSRSKLFHNPLR. A disordered region spans residues 51 to 77; sequence AAPPSVPTSDSTEEKRIEEEYGGDKEE. The segment covering 62 to 77 has biased composition (basic and acidic residues); the sequence is TEEKRIEEEYGGDKEE. The 113-residue stretch at 88 to 200 folds into the Rieske domain; that stretch reads WYPVSLVEDL…TMVSQGLLFV (113 aa). Positions 130, 132, 150, and 153 each coordinate [2Fe-2S] cluster.

Interacts with HCAR, SGR1, RCCR, PPH and the LHCII complex. Part of a SGR1-CCE-LHCII complex, which acts in chlorophyll breakdown.

It localises to the plastid. The protein localises to the chloroplast thylakoid membrane. The catalysed reaction is pheophorbide a + 2 reduced [2Fe-2S]-[ferredoxin] + O2 + 2 H(+) = red chlorophyll catabolite + 2 oxidized [2Fe-2S]-[ferredoxin]. The protein operates within porphyrin-containing compound metabolism; chlorophyll degradation. Its activity is regulated as follows. Might be regulated by a phosphorylation/dephosphorylation mechanism. In terms of biological role, catalyzes the key reaction of chlorophyll catabolism, porphyrin macrocycle cleavage of pheophorbide a (pheide a) to a primary fluorescent catabolite (pFCC). Works in a two-step reaction with red chlorophyll catabolite reductase (RCCR). Creates the intermediate RCC through the opening of the porphyrin macrocycle by the introduction of one atom of molecular oxygen at the alpha-methine bridge. Seems to be specific for pheide a. Belongs to the chlorophyll catabolic enzymes (CCEs). The chain is Pheophorbide a oxygenase, chloroplastic (PAO) from Arabidopsis thaliana (Mouse-ear cress).